The primary structure comprises 431 residues: MITDRVSDYLEKIEKSDVNAFIDVNSEKVLKEAEELEKNDYLKNKPLYGKIVAVKSNINVKGYKISCASKTLEKYTGTYDATVVKKLRLQGALIVGMTNMDEFASGSSGETSYFGPTKNPAAMDRIPGGSSSGSAAAVAADLCDMAIGSDTGGSIRNPASHCGIVGFKPSYGVVSRQGLCDLAMSFDQIGPLTKNAEDALVLTNAIKGIDRSDSTSLETPKFEKKDISNYKVGVVKEFMDVTDEKIRNEIEKGIEVFKDMGCKIVDLSYKYIDLALPTYYLINYVEFFSATRKYDGRRYGEFIEEACGEEVLRRILIGKHISEQEFSGKYYKKALQARKAMKKEMLGLFNSADLIVGPTVPKLPHKLGEDLSPMEMYAYDVLTVPTNICGICSGVVRCGNIQGVPVGLQIQGAPLEDEKVLSAMIEFEKNY.

Residues Lys-55 and Ser-130 each act as charge relay system in the active site. The active-site Acyl-ester intermediate is Ser-154.

This sequence belongs to the amidase family. GatA subfamily. In terms of assembly, heterotrimer of A, B and C subunits.

The enzyme catalyses L-glutamyl-tRNA(Gln) + L-glutamine + ATP + H2O = L-glutaminyl-tRNA(Gln) + L-glutamate + ADP + phosphate + H(+). In terms of biological role, allows the formation of correctly charged Gln-tRNA(Gln) through the transamidation of misacylated Glu-tRNA(Gln) in organisms which lack glutaminyl-tRNA synthetase. The reaction takes place in the presence of glutamine and ATP through an activated gamma-phospho-Glu-tRNA(Gln). This Methanococcus maripaludis (strain C6 / ATCC BAA-1332) protein is Glutamyl-tRNA(Gln) amidotransferase subunit A.